Reading from the N-terminus, the 130-residue chain is Small ribosomal subunit protein uS9 (130 aa).

The disordered stretch occupies residues 102 to 130 (GFLTRDPRMKERKKYGLKKARRAPQFSKR). Over residues 111 to 130 (KERKKYGLKKARRAPQFSKR) the composition is skewed to basic residues.

This sequence belongs to the universal ribosomal protein uS9 family.

The chain is Small ribosomal subunit protein uS9 from Clostridium novyi (strain NT).